The primary structure comprises 556 residues: Formate--tetrahydrofolate ligase (556 aa).

ATP is bound at residue 65-72 (TPAGEGKS).

Belongs to the formate--tetrahydrofolate ligase family.

It carries out the reaction (6S)-5,6,7,8-tetrahydrofolate + formate + ATP = (6R)-10-formyltetrahydrofolate + ADP + phosphate. It participates in one-carbon metabolism; tetrahydrofolate interconversion. This Natranaerobius thermophilus (strain ATCC BAA-1301 / DSM 18059 / JW/NM-WN-LF) protein is Formate--tetrahydrofolate ligase.